A 64-amino-acid polypeptide reads, in one-letter code: Alternative prion protein (64 aa).

Residues 1–22 (MEHWGEPIPGTGQSWRQPLSTS) form a disordered region. A compositionally biased stretch (polar residues) spans 11–22 (TGQSWRQPLSTS). Residues 40–58 (WRWLGSAPWWWLGTATWWW) form a helical membrane-spanning segment.

Its subcellular location is the mitochondrion outer membrane. This chain is Alternative prion protein, found in Ovis aries (Sheep).